The primary structure comprises 270 residues: Thiazole synthase (270 aa).

Catalysis depends on K112, which acts as the Schiff-base intermediate with DXP. 1-deoxy-D-xylulose 5-phosphate-binding positions include G173, 199-200 (AG), and 221-222 (NS).

This sequence belongs to the ThiG family. As to quaternary structure, homotetramer. Forms heterodimers with either ThiH or ThiS.

It is found in the cytoplasm. It carries out the reaction [ThiS sulfur-carrier protein]-C-terminal-Gly-aminoethanethioate + 2-iminoacetate + 1-deoxy-D-xylulose 5-phosphate = [ThiS sulfur-carrier protein]-C-terminal Gly-Gly + 2-[(2R,5Z)-2-carboxy-4-methylthiazol-5(2H)-ylidene]ethyl phosphate + 2 H2O + H(+). It participates in cofactor biosynthesis; thiamine diphosphate biosynthesis. Catalyzes the rearrangement of 1-deoxy-D-xylulose 5-phosphate (DXP) to produce the thiazole phosphate moiety of thiamine. Sulfur is provided by the thiocarboxylate moiety of the carrier protein ThiS. In vitro, sulfur can be provided by H(2)S. The chain is Thiazole synthase from Pseudomonas putida (strain ATCC 700007 / DSM 6899 / JCM 31910 / BCRC 17059 / LMG 24140 / F1).